Reading from the N-terminus, the 875-residue chain is Lysine-specific demethylase JMJ26 (875 aa).

Residues 31–103 (KPVEATSLSS…RSSVKKRATT (73 aa)) form a disordered region. Positions 62–69 (RKRSKADE) match the Nuclear localization signal motif. Residues 79-93 (KCDDENKCEENEKKQ) show a composition bias toward basic and acidic residues. The Zn(2+) site is built by Cys-193, Cys-196, Cys-207, Cys-210, Cys-216, Cys-219, Cys-236, Cys-239, Cys-322, Cys-325, Cys-339, and Cys-347. The segment at 193–240 (CHQCSKGERRYLFICTFCEVRLYCFPCIKKWYPHLSTDDILEKCPFCR) adopts an RING-type; degenerate zinc-finger fold. The segment at 317 to 347 (EERVFCNHCATSIVDLHRSCPKCSYELCLNC) adopts a B box-type; degenerate zinc-finger fold. The 224-residue stretch at 614–837 (PRSGILNIAT…ECLRLTDEFR (224 aa)) folds into the JmjC domain. Fe cation contacts are provided by His-658, Asp-660, and His-805.

This sequence belongs to the JARID1 histone demethylase family. Requires Fe(2+) as cofactor. Expressed in inflorescences, roots, siliques, leaves and stems.

The protein localises to the nucleus. Functionally, may function as histone H3 lysine demethylase and be involved in regulation of gene expression. This Arabidopsis thaliana (Mouse-ear cress) protein is Lysine-specific demethylase JMJ26.